Reading from the N-terminus, the 226-residue chain is UPF0758 protein GTNG_2548 (226 aa).

The MPN domain occupies Val-104 to Val-226. Residues His-175, His-177, and Asp-188 each contribute to the Zn(2+) site. A JAMM motif motif is present at residues His-175–Asp-188.

This sequence belongs to the UPF0758 family.

The polypeptide is UPF0758 protein GTNG_2548 (Geobacillus thermodenitrificans (strain NG80-2)).